The chain runs to 151 residues: MGKEYFLKVALREAKRAFEKGEVPVGAIIVKEGEIISKAHNSVEELKDPTAHAEMLAIKEACRRLNTKYLEGCELYVTLEPCIMCSYALVLSRIEKVIFSALDKKHGGVVSVFNILDEPTLNHRVKWEYYPLEEASELLSEFFKKLRNNII.

The CMP/dCMP-type deaminase domain maps to M1 to S111. H52 lines the Zn(2+) pocket. E54 functions as the Proton donor in the catalytic mechanism. Zn(2+) is bound by residues C82 and C85.

The protein belongs to the cytidine and deoxycytidylate deaminase family. Homodimer. It depends on Zn(2+) as a cofactor.

It catalyses the reaction adenosine(34) in tRNA + H2O + H(+) = inosine(34) in tRNA + NH4(+). Catalyzes the deamination of adenosine to inosine at the wobble position 34 of tRNA(Arg2). The chain is tRNA-specific adenosine deaminase from Aquifex aeolicus (strain VF5).